The chain runs to 313 residues: Cobalamin biosynthesis protein CobD (313 aa).

5 consecutive transmembrane segments (helical) span residues 52-72 (VAGA…GAAL), 79-99 (CWPV…TSLA), 154-174 (VVPL…YRAI), 204-224 (YVGA…VGGS), and 289-309 (AVVL…MLVY).

Belongs to the CobD/CbiB family.

Its subcellular location is the cell membrane. The protein operates within cofactor biosynthesis; adenosylcobalamin biosynthesis. Functionally, converts cobyric acid to cobinamide by the addition of aminopropanol on the F carboxylic group. The protein is Cobalamin biosynthesis protein CobD of Mycobacterium bovis (strain ATCC BAA-935 / AF2122/97).